A 179-amino-acid polypeptide reads, in one-letter code: Stathmin-2 (179 aa).

Positions 1-26 (MAKTAMAYKEKMKELSMLSLICSCFY) are membrane attachment. Ser-16 carries the phosphoserine modification. Residues Cys-22 and Cys-24 are each lipidated (S-palmitoyl cysteine). The 142-residue stretch at 38 to 179 (DDMEVKQINK…NKELQVELSG (142 aa)) folds into the SLD domain. The tract at residues 39-96 (DMEVKQINKRASGQAFELILKPPSPISEAPRTLASPKKKDLSLEEIQKKLEAAEGRRK) is regulatory/phosphorylation domain. At Ser-50 the chain carries Phosphoserine. Phosphoserine; by MAPK8 is present on residues Ser-62 and Ser-73. Residues 75 to 179 (KKKDLSLEEI…NKELQVELSG (105 aa)) adopt a coiled-coil conformation. Phosphoserine occurs at positions 80 and 97.

This sequence belongs to the stathmin family. Interacts with ITM2C. Interacts with MAPK8. Interacts with KIFBP. Interacts (via the N-terminal region) with CIB1 (via C-terminal region); the interaction is direct, occurs in a calcium-dependent manner and attenuates the neurite outgrowth inhibition of STMN2. In terms of processing, sumoylated. Post-translationally, phosphorylated by MAPK9 and MAPK10 in the developing brain cortex. Phosphorylated mostly by MAPK8. N-terminal palmitoylation promotes specific anchoring to the cytosolic leaflet of Golgi membranes and subsequent vesicular trafficking along dendrites and axons. Neuronal Stathmins are substrates for palmitoyltransferases ZDHHC3, ZDHHC7 and ZDHHC15. Expressed in neurons (at protein level). Present in growth cones and abundant in developing neurons.

The protein resides in the cytoplasm. It is found in the perinuclear region. Its subcellular location is the cell projection. It localises to the growth cone. The protein localises to the axon. The protein resides in the membrane. It is found in the golgi apparatus. Its subcellular location is the endosome. It localises to the lamellipodium. Functionally, regulator of microtubule stability. When phosphorylated by MAPK8, stabilizes microtubules and consequently controls neurite length in cortical neurons. In the developing brain, negatively regulates the rate of exit from multipolar stage and retards radial migration from the ventricular zone. This is Stathmin-2 (Stmn2) from Rattus norvegicus (Rat).